Consider the following 115-residue polypeptide: Macrophage migration inhibitory factor (115 aa).

The active-site Proton acceptor; via imino nitrogen is the proline 2. Substrate contacts are provided by lysine 33 and isoleucine 65. Lysine 78 carries the N6-acetyllysine; alternate modification. Lysine 78 is modified (N6-succinyllysine; alternate). Asparagine 98 contacts substrate.

It belongs to the MIF family. In terms of assembly, homotrimer. Interacts with CXCR2 extracellular domain. Interacts with the CD74 extracellular domain, USO1, COPS5 and BNIPL.

The protein resides in the secreted. It is found in the cytoplasm. It catalyses the reaction 3-phenylpyruvate = enol-phenylpyruvate. The catalysed reaction is L-dopachrome = 5,6-dihydroxyindole-2-carboxylate. Its function is as follows. Pro-inflammatory cytokine involved in the innate immune response to bacterial pathogens. The expression of MIF at sites of inflammation suggests a role as mediator in regulating the function of macrophages in host defense. Counteracts the anti-inflammatory activity of glucocorticoids. Has phenylpyruvate tautomerase and dopachrome tautomerase activity (in vitro), but the physiological substrate is not known. It is not clear whether the tautomerase activity has any physiological relevance, and whether it is important for cytokine activity. In Homo sapiens (Human), this protein is Macrophage migration inhibitory factor.